We begin with the raw amino-acid sequence, 130 residues long: MAKVPSRSPRKRVRKQVADGMAHIHASFNNTIVTITDRQGNALSWATAGGSGFRGSRKSTPFAAQVAAERAGVAAQDYGLKNLEVFVKGPGPGRESAIRALNAVGYKITNITDVTPIPHNGCRPPKKRRV.

Belongs to the universal ribosomal protein uS11 family. Part of the 30S ribosomal subunit. Interacts with proteins S7 and S18. Binds to IF-3.

Functionally, located on the platform of the 30S subunit, it bridges several disparate RNA helices of the 16S rRNA. Forms part of the Shine-Dalgarno cleft in the 70S ribosome. The chain is Small ribosomal subunit protein uS11 from Shewanella amazonensis (strain ATCC BAA-1098 / SB2B).